The sequence spans 383 residues: Cobalt-precorrin-5B C(1)-methyltransferase (383 aa).

This sequence belongs to the CbiD family.

The catalysed reaction is Co-precorrin-5B + S-adenosyl-L-methionine = Co-precorrin-6A + S-adenosyl-L-homocysteine. The protein operates within cofactor biosynthesis; adenosylcobalamin biosynthesis; cob(II)yrinate a,c-diamide from sirohydrochlorin (anaerobic route): step 6/10. Functionally, catalyzes the methylation of C-1 in cobalt-precorrin-5B to form cobalt-precorrin-6A. The chain is Cobalt-precorrin-5B C(1)-methyltransferase from Prochlorococcus marinus (strain MIT 9313).